The chain runs to 1043 residues: MAVSLPPTLGLSSAPDEIQHPHIKFSEWKFKLFRVRSFEKAPEKAQTEKQDSSEGKPSLEQSPAVLDKPGGQKSALPQPAFKPHPKFLKESHEDGKARDKAIHQANLRRLCRICGNSFNTTGHKRRYPVHGPVDGKTQVLLRKKEKRATSWPDLIAKVFRIDVKADVDSIHPTEFCHNCWSFMHRKFSSTPCEVYSPRNAAMEWHPHTLNCDICHIARRGLKRKSQQPNMQLSKKLKTVIDRARQARQRKRRAQARISSKELMKKIANCGQIHLSPKLLAVDFPAHFVKSISCQICEHILADPVETSCKHVFCRICILRCLKVMGSSCPSCHYPCFPTDLESPVKSFLSILNTLMVKCPAKECNEEISLEKYNHHISSHKESKETFVHINKGGRPRQHLLSLTRRAQKHRLRELKLQVKAFADKEEGGDVKSVCLTLFLLVLRARNEHRQADELEAIMRGQGSGLQPAVCLAIRVNTFLSCSQYHKMYRTVKAITGRQIFQPLHALRNAEKVLLPGYHPFEWQPPLKNVSSSTDVGIIDGLSGLSSSVDDYPVDTIAKRFRYDSALVSALMDMEEDILEGMRAQDLDDYLNGPFTVVVKESCDGMGDVSEKHGSGPVVPEKAVRFSFTVMKITIAHGSQNVKVFEEAKPNSELCCKPLCLMLADESDHETLTAILSPLIAEREAMKSSQLMLEMGGILRTFKFIFRGTGYDEKLVREVEGLEASGSVYICTLCDATRLEASQNLVFHSITRSHAENLERYEVWRSNPYHETVDELRDRVKGVSAKPFIETVPSIDALHCDIGNAAEFYKIFQLEIGEAYKNPHASKEERKRWQATLDKHLRKKMNLKPIMRMNGNFARKLMTKETVEAVCELIPSEERHEALRELMDLYLKMKPVWRSSCPAKECPESLCQYSFNSQRFAELLSTKFKYRYEGKITNYFHKTLAHVPEIIERDGSIGAWASEGNESGNKLFRRFRKMNARQSKYYEMEDVLKHHWLYTSKYLQKFMNAHKAFKNSGFTINLQRSSGDTLDLENSPESQDLMEF.

Basic and acidic residues-rich tracts occupy residues 39-54 (EKAP…DSSE) and 87-98 (FLKESHEDGKAR). Positions 39–98 (EKAPEKAQTEKQDSSEGKPSLEQSPAVLDKPGGQKSALPQPAFKPHPKFLKESHEDGKAR) are disordered. A Glycyl lysine isopeptide (Lys-Gly) (interchain with G-Cter in ubiquitin) cross-link involves residue lysine 234. Zn(2+)-binding residues include cysteine 269, histidine 273, cysteine 293, cysteine 296, histidine 298, cysteine 308, histidine 310, cysteine 313, cysteine 316, cysteine 328, cysteine 331, cysteine 358, cysteine 363, histidine 375, and histidine 379. The segment at 293–332 (CQICEHILADPVETSCKHVFCRICILRCLKVMGSSCPSCH) adopts an RING-type zinc-finger fold. An RAG1-type zinc finger spans residues 354–383 (LMVKCPAKECNEEISLEKYNHHISSHKESK). Residues 392–459 (GGRPRQHLLS…QADELEAIMR (68 aa)) constitute a DNA-binding region (NBD). The a divalent metal cation site is built by aspartate 603, aspartate 711, and glutamate 965.

Belongs to the RAG1 family. In terms of assembly, homodimer. Component of the RAG complex composed of core components RAG1 and RAG2, and associated component HMGB1 or HMGB2. Interacts with DCAF1, leading to recruitment of the CUL4A-RBX1-DDB1-DCAF1/VPRBP complex to ubiquitinate proteins and limit error-prone repair during V(D)J recombination. The cofactor is Mg(2+). Mn(2+) serves as cofactor. Autoubiquitinated in the presence of CDC34/UBCH3.

The protein resides in the nucleus. The enzyme catalyses S-ubiquitinyl-[E2 ubiquitin-conjugating enzyme]-L-cysteine + [acceptor protein]-L-lysine = [E2 ubiquitin-conjugating enzyme]-L-cysteine + N(6)-ubiquitinyl-[acceptor protein]-L-lysine.. In terms of biological role, catalytic component of the RAG complex, a multiprotein complex that mediates the DNA cleavage phase during V(D)J recombination. V(D)J recombination assembles a diverse repertoire of immunoglobulin and T-cell receptor genes in developing B and T-lymphocytes through rearrangement of different V (variable), in some cases D (diversity), and J (joining) gene segments. In the RAG complex, RAG1 mediates the DNA-binding to the conserved recombination signal sequences (RSS) and catalyzes the DNA cleavage activities by introducing a double-strand break between the RSS and the adjacent coding segment. RAG2 is not a catalytic component but is required for all known catalytic activities. DNA cleavage occurs in 2 steps: a first nick is introduced in the top strand immediately upstream of the heptamer, generating a 3'-hydroxyl group that can attack the phosphodiester bond on the opposite strand in a direct transesterification reaction, thereby creating 4 DNA ends: 2 hairpin coding ends and 2 blunt, 5'-phosphorylated ends. The chromatin structure plays an essential role in the V(D)J recombination reactions and the presence of histone H3 trimethylated at 'Lys-4' (H3K4me3) stimulates both the nicking and haipinning steps. The RAG complex also plays a role in pre-B cell allelic exclusion, a process leading to expression of a single immunoglobulin heavy chain allele to enforce clonality and monospecific recognition by the B-cell antigen receptor (BCR) expressed on individual B-lymphocytes. The introduction of DNA breaks by the RAG complex on one immunoglobulin allele induces ATM-dependent repositioning of the other allele to pericentromeric heterochromatin, preventing accessibility to the RAG complex and recombination of the second allele. In addition to its endonuclease activity, RAG1 also acts as an E3 ubiquitin-protein ligase that mediates monoubiquitination of histone H3. Histone H3 monoubiquitination is required for the joining step of V(D)J recombination. Mediates polyubiquitination of KPNA1. This Sus scrofa (Pig) protein is V(D)J recombination-activating protein 1 (RAG1).